The chain runs to 495 residues: Meiosis-specific nuclear structural protein 1 (495 aa).

Positions M1–E314 are interaction with BBOF1. Residues V28–K410 are a coiled coil. Y188 carries the phosphotyrosine modification.

This sequence belongs to the MNS1 family. Able to form oligomers. Microtubule inner protein component of sperm flagellar doublet microtubules. Interacts with ODAD1. Interacts with BBOF1. In terms of tissue distribution, expressed in nasal respiratory epithelium and in the sperm.

It is found in the nucleus. It localises to the cytoplasm. The protein resides in the cytoskeleton. Its subcellular location is the cilium axoneme. The protein localises to the flagellum axoneme. Functionally, microtubule inner protein (MIP) part of the dynein-decorated doublet microtubules (DMTs) in cilia axoneme, which is required for motile cilia beating. May play a role in the control of meiotic division and germ cell differentiation through regulation of pairing and recombination during meiosis. Required for sperm flagella assembly. May play a role in the assembly and function of the outer dynein arm-docking complex (ODA-DC). ODA-DC mediates outer dynein arms (ODA) binding onto the axonemal doublet microtubules. The protein is Meiosis-specific nuclear structural protein 1 of Homo sapiens (Human).